A 294-amino-acid chain; its full sequence is Elongation factor Ts (294 aa).

Residues 79–82 form an involved in Mg(2+) ion dislocation from EF-Tu region; that stretch reads TDFV.

Belongs to the EF-Ts family.

Its subcellular location is the cytoplasm. In terms of biological role, associates with the EF-Tu.GDP complex and induces the exchange of GDP to GTP. It remains bound to the aminoacyl-tRNA.EF-Tu.GTP complex up to the GTP hydrolysis stage on the ribosome. This Oceanobacillus iheyensis (strain DSM 14371 / CIP 107618 / JCM 11309 / KCTC 3954 / HTE831) protein is Elongation factor Ts.